The following is a 158-amino-acid chain: Transcription elongation factor GreA (158 aa).

The protein belongs to the GreA/GreB family.

Necessary for efficient RNA polymerase transcription elongation past template-encoded arresting sites. The arresting sites in DNA have the property of trapping a certain fraction of elongating RNA polymerases that pass through, resulting in locked ternary complexes. Cleavage of the nascent transcript by cleavage factors such as GreA or GreB allows the resumption of elongation from the new 3'terminus. GreA releases sequences of 2 to 3 nucleotides. This Acinetobacter baumannii (strain SDF) protein is Transcription elongation factor GreA.